The chain runs to 594 residues: Beta-fructofuranosidase, insoluble isoenzyme CWINV3 (594 aa).

The signal sequence occupies residues 1 to 28; sequence MAKLNRSNIGLSLLLSMFLANFITDLEA. Substrate contacts are provided by residues 50-53, Q69, W77, and 113-114; these read WMND and WS. D53 is an active-site residue. N-linked (GlcNAc...) asparagine glycosylation is present at N147. 179-180 is a substrate binding site; sequence RD. Residue N217 is glycosylated (N-linked (GlcNAc...) asparagine). Position 235 (E235) interacts with substrate. N-linked (GlcNAc...) asparagine glycans are attached at residues N297 and N329. An intrachain disulfide couples C428 to C480.

Belongs to the glycosyl hydrolase 32 family. In terms of tissue distribution, expressed in seedlings, leaves, flowers, and seeds.

Its subcellular location is the secreted. It localises to the extracellular space. The protein localises to the apoplast. It is found in the cell wall. It catalyses the reaction Hydrolysis of terminal, non-reducing (2-&gt;1)- and (2-&gt;6)-linked beta-D-fructofuranose residues in fructans.. 6-fructan exohydrolase that can use phlein, levan, neokestose, levanbiose, 6-kestose, and 1-kestose as substrates. This is Beta-fructofuranosidase, insoluble isoenzyme CWINV3 (CWINV3) from Arabidopsis thaliana (Mouse-ear cress).